Consider the following 137-residue polypeptide: Peptide methionine sulfoxide reductase MsrB (137 aa).

Residues 1 to 33 form a disordered region; it reads MSNNQDRPGQITDESLRERLSPEAYAVTRRAGT. Residues 13-135 form the MsrB domain; it reads DESLRERLSP…NSLSLDFKAA (123 aa). The Zn(2+) site is built by C52, C55, C101, and C104. C124 acts as the Nucleophile in catalysis.

The protein belongs to the MsrB Met sulfoxide reductase family. Zn(2+) is required as a cofactor.

The enzyme catalyses L-methionyl-[protein] + [thioredoxin]-disulfide + H2O = L-methionyl-(R)-S-oxide-[protein] + [thioredoxin]-dithiol. The sequence is that of Peptide methionine sulfoxide reductase MsrB from Thioalkalivibrio sulfidiphilus (strain HL-EbGR7).